The primary structure comprises 382 residues: D-galactonate dehydratase (382 aa).

Aspartate 183 is a Mg(2+) binding site. Histidine 185 functions as the Proton donor in the catalytic mechanism. Residues glutamate 209 and glutamate 235 each coordinate Mg(2+). Histidine 285 (proton acceptor) is an active-site residue.

It belongs to the mandelate racemase/muconate lactonizing enzyme family. GalD subfamily. Requires Mg(2+) as cofactor.

It catalyses the reaction D-galactonate = 2-dehydro-3-deoxy-D-galactonate + H2O. It participates in carbohydrate acid metabolism; D-galactonate degradation; D-glyceraldehyde 3-phosphate and pyruvate from D-galactonate: step 1/3. Its function is as follows. Catalyzes the dehydration of D-galactonate to 2-keto-3-deoxy-D-galactonate. The sequence is that of D-galactonate dehydratase from Escherichia coli (strain UTI89 / UPEC).